A 336-amino-acid chain; its full sequence is Phosphate acyltransferase (336 aa).

The protein belongs to the PlsX family. Homodimer. Probably interacts with PlsY.

Its subcellular location is the cytoplasm. It catalyses the reaction a fatty acyl-[ACP] + phosphate = an acyl phosphate + holo-[ACP]. Its pathway is lipid metabolism; phospholipid metabolism. Catalyzes the reversible formation of acyl-phosphate (acyl-PO(4)) from acyl-[acyl-carrier-protein] (acyl-ACP). This enzyme utilizes acyl-ACP as fatty acyl donor, but not acyl-CoA. This is Phosphate acyltransferase from Pseudomonas paraeruginosa (strain DSM 24068 / PA7) (Pseudomonas aeruginosa (strain PA7)).